Consider the following 421-residue polypeptide: D-inositol 3-phosphate glycosyltransferase (421 aa).

A 1D-myo-inositol 3-phosphate-binding site is contributed by H9. UDP-N-acetyl-alpha-D-glucosamine is bound by residues 15-16 and G23; that span reads QP. 1D-myo-inositol 3-phosphate-binding positions include 20–25, K78, Y110, T134, and R154; that span reads DAGGMN. Residues R231, K236, and R294 each contribute to the UDP-N-acetyl-alpha-D-glucosamine site. Mg(2+)-binding residues include Y303, Q304, and A306. E316 and E324 together coordinate UDP-N-acetyl-alpha-D-glucosamine. T330 serves as a coordination point for Mg(2+).

Belongs to the glycosyltransferase group 1 family. MshA subfamily. As to quaternary structure, homodimer.

The catalysed reaction is 1D-myo-inositol 3-phosphate + UDP-N-acetyl-alpha-D-glucosamine = 1D-myo-inositol 2-acetamido-2-deoxy-alpha-D-glucopyranoside 3-phosphate + UDP + H(+). Catalyzes the transfer of a N-acetyl-glucosamine moiety to 1D-myo-inositol 3-phosphate to produce 1D-myo-inositol 2-acetamido-2-deoxy-glucopyranoside 3-phosphate in the mycothiol biosynthesis pathway. In Corynebacterium aurimucosum (strain ATCC 700975 / DSM 44827 / CIP 107346 / CN-1) (Corynebacterium nigricans), this protein is D-inositol 3-phosphate glycosyltransferase.